Here is a 432-residue protein sequence, read N- to C-terminus: Transcriptional adapter 3-A (432 aa).

Disordered regions lie at residues 90–127 (HELG…RNMQ) and 275–314 (SPVE…TKSL). Over residues 293 to 305 (DGASTSPRSQNKP) the composition is skewed to polar residues. The stretch at 335–398 (ADDSEDEVLA…NEVMDAFRKI (64 aa)) forms a coiled coil.

Belongs to the NGG1 family.

The protein localises to the nucleus. Its function is as follows. Functions as a component of the PCAF complex. The PCAF complex is capable of efficiently acetylating histones in a nucleosomal context. The protein is Transcriptional adapter 3-A (tada3-a) of Xenopus laevis (African clawed frog).